Reading from the N-terminus, the 280-residue chain is Monoacylglycerol lipase (280 aa).

S111 (nucleophile) is an active-site residue. Residues D227 and H257 each act as charge relay system in the active site.

This sequence belongs to the AB hydrolase superfamily.

It is found in the secreted. Its subcellular location is the cell wall. The catalysed reaction is Hydrolyzes glycerol monoesters of long-chain fatty acids.. Functionally, contributes to cell growth, probably by hydrolyzing exogenous lipids. Catalyzes the hydrolysis of monoacylglycerols (MAG) with fatty acid chains ranging from C14 to C18, with a maximum activity on monoolein. Is unable to hydrolyze long-chain diacylglycerol (DAG). The polypeptide is Monoacylglycerol lipase (Mycolicibacterium smegmatis (strain ATCC 700084 / mc(2)155) (Mycobacterium smegmatis)).